We begin with the raw amino-acid sequence, 269 residues long: Phosphate import ATP-binding protein PstB (269 aa).

Positions 22 to 264 (AEVRDLNFYY…PVQQKTADYV (243 aa)) constitute an ABC transporter domain. 54 to 61 (GPSGCGKT) contributes to the ATP binding site.

Belongs to the ABC transporter superfamily. Phosphate importer (TC 3.A.1.7) family. In terms of assembly, the complex is composed of two ATP-binding proteins (PstB), two transmembrane proteins (PstC and PstA) and a solute-binding protein (PstS).

It localises to the cell inner membrane. It carries out the reaction phosphate(out) + ATP + H2O = ADP + 2 phosphate(in) + H(+). In terms of biological role, part of the ABC transporter complex PstSACB involved in phosphate import. Responsible for energy coupling to the transport system. This chain is Phosphate import ATP-binding protein PstB, found in Thermosynechococcus vestitus (strain NIES-2133 / IAM M-273 / BP-1).